A 418-amino-acid polypeptide reads, in one-letter code: DnaJ protein homolog 2 (418 aa).

The J domain occupies 11 to 76 (NTKYYEVLGV…REIYDQYGEE (66 aa)). Residues 135–219 (GTSKKLSLSR…CKGEKVVQQK (85 aa)) form a CR-type zinc finger. CXXCXGXG motif repeat units follow at residues 148-155 (CTKCKGKG), 164-171 (CASCQGSG), 191-198 (CNECKGTG), and 207-214 (CPQCKGEK). The tract at residues 382 to 418 (VNIEEEMRRKQHQQAQEAYDEDDEGHGGAQRVQCAQQ) is disordered. The residue at position 415 (cysteine 415) is a Cysteine methyl ester. Cysteine 415 carries the S-farnesyl cysteine lipid modification. A propeptide spans 416 to 418 (AQQ) (removed in mature form).

It localises to the membrane. Its function is as follows. Plays a continuous role in plant development probably in the structural organization of compartments. The polypeptide is DnaJ protein homolog 2 (LDJ2) (Allium porrum (Leek)).